A 2007-amino-acid chain; its full sequence is Structural maintenance of chromosomes flexible hinge domain-containing protein 1 (2007 aa).

Residue Ala-2 is modified to N-acetylalanine. The interval 111-702 (TKERIDFLPH…LSVTWPEGDE (592 aa)) is ATPase activity domain. Position 833 is a phosphoserine (Ser-833). At Lys-1350 the chain carries N6-acetyllysine. Residue Lys-1375 forms a Glycyl lysine isopeptide (Lys-Gly) (interchain with G-Cter in SUMO2) linkage. A Phosphothreonine modification is found at Thr-1500. The SMC hinge domain maps to 1721–1848 (GDILGKIAHL…DNLDAANHYR (128 aa)). Lys-1803 is subject to N6-succinyllysine. Ser-1975 is subject to Phosphoserine. Residues 1984 to 2007 (PIPTKRMRRESTRQNRRPKGDVPN) are disordered.

It belongs to the SMC family. Highly divergent. In terms of assembly, homodimer; homodimerizes via its SMC hinge domain. Interacts with LRIF1. Sumoylated with SUMO1. During embryogenesis, specifically expressed in immature olfactory sensory neurons.

It localises to the chromosome. It catalyses the reaction ATP + H2O = ADP + phosphate + H(+). Non-canonical member of the structural maintenance of chromosomes (SMC) protein family that plays a key role in epigenetic silencing by regulating chromatin architecture. Promotes heterochromatin formation in both autosomes and chromosome X, probably by mediating the merge of chromatin compartments. Plays a key role in chromosome X inactivation in females by promoting the spreading of heterochromatin. Recruited to inactivated chromosome X by Xist RNA and acts by mediating the merge of chromatin compartments: promotes random chromatin interactions that span the boundaries of existing structures, leading to create a compartment-less architecture typical of inactivated chromosome X. Required to facilitate Xist RNA spreading. Also required for silencing of a subset of clustered autosomal loci in somatic cells, such as the DUX4 locus. Has ATPase activity; may participate in structural manipulation of chromatin in an ATP-dependent manner as part of its role in gene expression regulation. Also plays a role in DNA repair: localizes to sites of DNA double-strand breaks in response to DNA damage to promote the repair of DNA double-strand breaks. Acts by promoting non-homologous end joining (NHEJ) and inhibiting homologous recombination (HR) repair. Required during preimplantation development, probably acts by regulating chromatin architecture. The polypeptide is Structural maintenance of chromosomes flexible hinge domain-containing protein 1 (Mus musculus (Mouse)).